The sequence spans 706 residues: Glutamine-dependent NAD(+) synthetase (706 aa).

The region spanning valine 5 to leucine 275 is the CN hydrolase domain. Glutamate 45 functions as the Proton acceptor; for glutaminase activity in the catalytic mechanism. The For glutaminase activity role is filled by lysine 114. Cysteine 175 functions as the Nucleophile; for glutaminase activity in the catalytic mechanism. The segment at tyrosine 325 to aspartate 706 is ligase. Proline 355–serine 362 is a binding site for ATP. Residue serine 357 is part of the active site.

In the C-terminal section; belongs to the NAD synthetase family. As to quaternary structure, homohexamer.

It carries out the reaction deamido-NAD(+) + L-glutamine + ATP + H2O = L-glutamate + AMP + diphosphate + NAD(+) + H(+). The protein operates within cofactor biosynthesis; NAD(+) biosynthesis; NAD(+) from deamido-NAD(+) (L-Gln route): step 1/1. Catalyzes the final step of the nicotinamide adenine dinucleotide (NAD) de novo synthesis pathway, the ATP-dependent amidation of deamido-NAD using L-glutamine as a nitrogen source. This chain is Glutamine-dependent NAD(+) synthetase (NADSYN1), found in Macaca fascicularis (Crab-eating macaque).